We begin with the raw amino-acid sequence, 285 residues long: Acetylglutamate kinase (285 aa).

Substrate-binding positions include 63–64 (GG), Arg-85, and Asn-178.

The protein belongs to the acetylglutamate kinase family. ArgB subfamily.

The protein resides in the cytoplasm. The catalysed reaction is N-acetyl-L-glutamate + ATP = N-acetyl-L-glutamyl 5-phosphate + ADP. The protein operates within amino-acid biosynthesis; L-arginine biosynthesis; N(2)-acetyl-L-ornithine from L-glutamate: step 2/4. Functionally, catalyzes the ATP-dependent phosphorylation of N-acetyl-L-glutamate. The chain is Acetylglutamate kinase from Synechococcus sp. (strain CC9311).